Here is a 165-residue protein sequence, read N- to C-terminus: Phosphopantetheine adenylyltransferase (165 aa).

Threonine 9 provides a ligand contact to substrate. Residues 9 to 10 (TF) and histidine 17 each bind ATP. Residues lysine 41, leucine 78, and arginine 92 each contribute to the substrate site. ATP is bound by residues 93-95 (GLR), glutamate 103, and 128-134 (HQAIASK).

It belongs to the bacterial CoaD family. As to quaternary structure, homohexamer. Mg(2+) serves as cofactor.

It is found in the cytoplasm. It carries out the reaction (R)-4'-phosphopantetheine + ATP + H(+) = 3'-dephospho-CoA + diphosphate. It participates in cofactor biosynthesis; coenzyme A biosynthesis; CoA from (R)-pantothenate: step 4/5. In terms of biological role, reversibly transfers an adenylyl group from ATP to 4'-phosphopantetheine, yielding dephospho-CoA (dPCoA) and pyrophosphate. This chain is Phosphopantetheine adenylyltransferase, found in Ruegeria sp. (strain TM1040) (Silicibacter sp.).